A 376-amino-acid chain; its full sequence is UPF0754 membrane protein SERP1382 (376 aa).

Helical transmembrane passes span 4-24 (ILLVVFMIILGAIIGGVTNMI) and 356-376 (TLGFILGGIIGFFQGVIAIFV).

The protein belongs to the UPF0754 family.

Its subcellular location is the cell membrane. The sequence is that of UPF0754 membrane protein SERP1382 from Staphylococcus epidermidis (strain ATCC 35984 / DSM 28319 / BCRC 17069 / CCUG 31568 / BM 3577 / RP62A).